The primary structure comprises 270 residues: Putative phosphoenolpyruvate synthase regulatory protein (270 aa).

Position 150–157 (150–157 (GVSRCGKT)) interacts with ADP.

It belongs to the pyruvate, phosphate/water dikinase regulatory protein family. PSRP subfamily.

The enzyme catalyses [pyruvate, water dikinase] + ADP = [pyruvate, water dikinase]-phosphate + AMP + H(+). It carries out the reaction [pyruvate, water dikinase]-phosphate + phosphate + H(+) = [pyruvate, water dikinase] + diphosphate. Bifunctional serine/threonine kinase and phosphorylase involved in the regulation of the phosphoenolpyruvate synthase (PEPS) by catalyzing its phosphorylation/dephosphorylation. This is Putative phosphoenolpyruvate synthase regulatory protein from Shewanella sp. (strain ANA-3).